Here is a 68-residue protein sequence, read N- to C-terminus: Phylloseptin-SP1 (68 aa).

A signal peptide spans 1–22 (MAFLKKSLFLVLFLGLVSLSIC). Positions 23–45 (EEKERETKEEENEQEDDNREEKR) are excised as a propeptide. Leu67 carries the post-translational modification Leucine amide.

Expressed by the skin glands.

It is found in the secreted. Its function is as follows. Weak cationic amphipathic alpha-helical antimicrobial peptide with weak activity against Gram-positive and Gram-negative bacteria and fungi. Has been tested against E.coli (MIC&gt;217.69 uM), S.aureus (MIC&gt;217.69 uM), K.pneumoniae (MIC&gt;189.00 uM) and C.albicans (MIC&gt;217.69 uM). Shows a moderate hemolytic activity. The protein is Phylloseptin-SP1 of Agalychnis spurrelli (Gliding leaf frog).